Reading from the N-terminus, the 96-residue chain is Co-chaperonin GroES (96 aa).

It belongs to the GroES chaperonin family. As to quaternary structure, heptamer of 7 subunits arranged in a ring. Interacts with the chaperonin GroEL.

It localises to the cytoplasm. Its function is as follows. Together with the chaperonin GroEL, plays an essential role in assisting protein folding. The GroEL-GroES system forms a nano-cage that allows encapsulation of the non-native substrate proteins and provides a physical environment optimized to promote and accelerate protein folding. GroES binds to the apical surface of the GroEL ring, thereby capping the opening of the GroEL channel. The protein is Co-chaperonin GroES of Syntrophomonas wolfei subsp. wolfei (strain DSM 2245B / Goettingen).